A 371-amino-acid polypeptide reads, in one-letter code: Integrator complex assembly factor WDR73 (371 aa).

WD repeat units follow at residues 81–121 (FSDR…DVIE), 273–313 (SPDP…GKKT), and 333–371 (DSAP…LQAS).

The protein belongs to the WD repeat WDR73 family. In terms of assembly, interacts with INTS9 and INTS11; the interaction is direct. Part of the multiprotein complex composed of BRAT1, WDR73, as well as integrator complex subunits INTS9 and INTS11.

The protein resides in the cytoplasm. It is found in the cytoskeleton. The protein localises to the spindle. It localises to the spindle pole. Its subcellular location is the cleavage furrow. Functionally, component of a multiprotein complex required for the assembly of the RNA endonuclease module of the integrator complex. Associates with INTS9 and INTS11 in the cytoplasm, stabilizing the INTS9-INTS11 heterodimer and blocking the active site of INTS11. BRAT1 then joins the complex and plugs the active site of INTS11, leading to WDR73 release and nuclear import of INTS9 and INTS11. The chain is Integrator complex assembly factor WDR73 (Wdr73) from Mus musculus (Mouse).